A 207-amino-acid polypeptide reads, in one-letter code: Guanylate kinase (207 aa).

A Guanylate kinase-like domain is found at 6 to 185 (GLLIVLSGPS…AKNRIQSIVE (180 aa)). 13–20 (GPSGVGKG) is a binding site for ATP.

This sequence belongs to the guanylate kinase family.

Its subcellular location is the cytoplasm. It carries out the reaction GMP + ATP = GDP + ADP. Essential for recycling GMP and indirectly, cGMP. In Staphylococcus epidermidis (strain ATCC 35984 / DSM 28319 / BCRC 17069 / CCUG 31568 / BM 3577 / RP62A), this protein is Guanylate kinase.